The following is a 338-amino-acid chain: Glycerol-3-phosphate dehydrogenase [NAD(P)+] (338 aa).

Residues Ser-13, Trp-14, and Lys-108 each coordinate NADPH. Positions 108, 139, and 141 each coordinate sn-glycerol 3-phosphate. An NADPH-binding site is contributed by Ala-143. Residues Lys-194, Asp-247, Ser-257, Arg-258, and Asn-259 each coordinate sn-glycerol 3-phosphate. Residue Lys-194 is the Proton acceptor of the active site. Arg-258 is a binding site for NADPH. NADPH-binding residues include Val-282 and Glu-284.

Belongs to the NAD-dependent glycerol-3-phosphate dehydrogenase family.

It localises to the cytoplasm. The enzyme catalyses sn-glycerol 3-phosphate + NAD(+) = dihydroxyacetone phosphate + NADH + H(+). The catalysed reaction is sn-glycerol 3-phosphate + NADP(+) = dihydroxyacetone phosphate + NADPH + H(+). Its pathway is membrane lipid metabolism; glycerophospholipid metabolism. Catalyzes the reduction of the glycolytic intermediate dihydroxyacetone phosphate (DHAP) to sn-glycerol 3-phosphate (G3P), the key precursor for phospholipid synthesis. The chain is Glycerol-3-phosphate dehydrogenase [NAD(P)+] from Streptococcus pyogenes serotype M2 (strain MGAS10270).